Reading from the N-terminus, the 149-residue chain is Transcriptional repressor NrdR (149 aa).

A zinc finger spans residues 3–34; sequence CPFCSATDTKVIDSRLVADGHQVRRRRECAEC. Positions 49–139 constitute an ATP-cone domain; it reads PRVVKQDGSR…VYRAFEDVSE (91 aa).

Belongs to the NrdR family. Requires Zn(2+) as cofactor.

In terms of biological role, negatively regulates transcription of bacterial ribonucleotide reductase nrd genes and operons by binding to NrdR-boxes. The sequence is that of Transcriptional repressor NrdR from Shewanella woodyi (strain ATCC 51908 / MS32).